The chain runs to 196 residues: Carnitine operon protein CaiE (196 aa).

The interval 173–196 (TQPLRQMEENRPRLQGTTDVTPKR) is disordered. A compositionally biased stretch (polar residues) spans 187 to 196 (QGTTDVTPKR).

It belongs to the transferase hexapeptide repeat family.

Its pathway is amine and polyamine metabolism; carnitine metabolism. In terms of biological role, overproduction of CaiE stimulates the activity of CaiB and CaiD. This chain is Carnitine operon protein CaiE, found in Escherichia coli O127:H6 (strain E2348/69 / EPEC).